The sequence spans 466 residues: Glutamate-1-semialdehyde 2,1-aminomutase (466 aa).

Residue K292 is modified to N6-(pyridoxal phosphate)lysine.

The protein belongs to the class-III pyridoxal-phosphate-dependent aminotransferase family. HemL subfamily. In terms of assembly, homodimer. Requires pyridoxal 5'-phosphate as cofactor.

It is found in the cytoplasm. It carries out the reaction (S)-4-amino-5-oxopentanoate = 5-aminolevulinate. It functions in the pathway porphyrin-containing compound metabolism; protoporphyrin-IX biosynthesis; 5-aminolevulinate from L-glutamyl-tRNA(Glu): step 2/2. The sequence is that of Glutamate-1-semialdehyde 2,1-aminomutase from Tropheryma whipplei (strain TW08/27) (Whipple's bacillus).